The following is a 440-amino-acid chain: Chromosomal replication initiator protein DnaA (440 aa).

The interval Met1–Thr69 is domain I, interacts with DnaA modulators. The segment at Thr69–Thr96 is domain II. The domain III, AAA+ region stretch occupies residues Pro97–Lys313. 4 residues coordinate ATP: Gly140, Gly142, Lys143, and Thr144. The segment at Glu314–Gly440 is domain IV, binds dsDNA.

It belongs to the DnaA family. As to quaternary structure, oligomerizes as a right-handed, spiral filament on DNA at oriC.

The protein resides in the cytoplasm. Plays an essential role in the initiation and regulation of chromosomal replication. ATP-DnaA binds to the origin of replication (oriC) to initiate formation of the DNA replication initiation complex once per cell cycle. Binds the DnaA box (a 9 base pair repeat at the origin) and separates the double-stranded (ds)DNA. Forms a right-handed helical filament on oriC DNA; dsDNA binds to the exterior of the filament while single-stranded (ss)DNA is stabiized in the filament's interior. The ATP-DnaA-oriC complex binds and stabilizes one strand of the AT-rich DNA unwinding element (DUE), permitting loading of DNA polymerase. After initiation quickly degrades to an ADP-DnaA complex that is not apt for DNA replication. Binds acidic phospholipids. The polypeptide is Chromosomal replication initiator protein DnaA (Thermotoga sp. (strain RQ2)).